The following is a 192-amino-acid chain: Fe/S biogenesis protein NfuA (192 aa).

Cysteine 149 and cysteine 152 together coordinate [4Fe-4S] cluster.

It belongs to the NfuA family. In terms of assembly, homodimer. Requires [4Fe-4S] cluster as cofactor.

In terms of biological role, involved in iron-sulfur cluster biogenesis. Binds a 4Fe-4S cluster, can transfer this cluster to apoproteins, and thereby intervenes in the maturation of Fe/S proteins. Could also act as a scaffold/chaperone for damaged Fe/S proteins. In Shewanella piezotolerans (strain WP3 / JCM 13877), this protein is Fe/S biogenesis protein NfuA.